The primary structure comprises 98 residues: Pore-forming peptide amoebapore A (98 aa).

The first 21 residues, 1–21 (MKAIVFVLIFAVAFAVTATHQ), serve as a signal peptide directing secretion. In terms of domain architecture, Saposin B-type spans 22-98 (GEILCNLCTG…NAICAKIHAC (77 aa)). 3 disulfides stabilise this stretch: C26–C98, C29–C92, and C56–C67.

As to quaternary structure, monomer (at pH below 4 and pH above 6). Homodimer (at pH 4-6). Hexamer; formed during insertion in the membrane.

Its subcellular location is the cytoplasmic granule. Its function is as follows. Forms pores in the cell membrane of host cells. Has antibacterial activity against M.luteus, no activity against E.coli. Implicated in the cytolytic activity of the parasite. The sequence is that of Pore-forming peptide amoebapore A from Entamoeba histolytica (strain ATCC 30459 / HM-1:IMSS / ABRM).